A 579-amino-acid chain; its full sequence is Probable cytochrome c oxidase subunit 1-alpha (579 aa).

The disordered stretch occupies residues 1 to 21; sequence MSILNEPQGAAAAEDSYENEL. A helical transmembrane segment spans residues 44–64; the sequence is IGTLYLVTSFAFFCIGGVMAL. His90 lines the Fe(II)-heme a pocket. A run of 6 helical transmembrane segments spans residues 93 to 113, 125 to 145, 174 to 194, 217 to 237, 262 to 282, and 295 to 315; these read IMLL…IMPL, LNMF…GGFL, MWIM…VNFI, VLLT…ALFA, LFWF…FGII, and FGYM…VTVW. Residues His268 and Tyr272 each contribute to the Cu cation site. Positions 268-272 form a cross-link, 1'-histidyl-3'-tyrosine (His-Tyr); it reads HPEVY. Cu cation-binding residues include His317 and His318. The next 5 membrane-spanning stretches (helical) occupy residues 319–339, 363–383, 397–417, 437–457, and 480–500; these read MYVT…LIAV, MLWA…GVIL, FVVA…MFSG, ITFW…HWLG, and ISTI…YNVW. His401 contributes to the heme a3 binding site. His403 provides a ligand contact to Fe(II)-heme a.

It belongs to the heme-copper respiratory oxidase family. In terms of assembly, associates with subunits II, III and IV to form cytochrome c oxidase. It depends on Cu(2+) as a cofactor. Heme serves as cofactor.

The protein localises to the cell membrane. The enzyme catalyses 4 Fe(II)-[cytochrome c] + O2 + 8 H(+)(in) = 4 Fe(III)-[cytochrome c] + 2 H2O + 4 H(+)(out). Its pathway is energy metabolism; oxidative phosphorylation. Its function is as follows. Cytochrome c oxidase is the component of the respiratory chain that catalyzes the reduction of oxygen to water. Subunits 1-3 form the functional core of the enzyme complex. CO I is the catalytic subunit of the enzyme. Electrons originating in cytochrome c are transferred via the copper A center of subunit 2 and heme A of subunit 1 to the bimetallic center formed by heme A3 and copper B. This chain is Probable cytochrome c oxidase subunit 1-alpha (ctaD1), found in Streptomyces avermitilis (strain ATCC 31267 / DSM 46492 / JCM 5070 / NBRC 14893 / NCIMB 12804 / NRRL 8165 / MA-4680).